A 102-amino-acid chain; its full sequence is Large ribosomal subunit protein uL24 (102 aa).

This sequence belongs to the universal ribosomal protein uL24 family. In terms of assembly, part of the 50S ribosomal subunit.

Its function is as follows. One of two assembly initiator proteins, it binds directly to the 5'-end of the 23S rRNA, where it nucleates assembly of the 50S subunit. In terms of biological role, one of the proteins that surrounds the polypeptide exit tunnel on the outside of the subunit. The chain is Large ribosomal subunit protein uL24 from Cupriavidus necator (strain ATCC 17699 / DSM 428 / KCTC 22496 / NCIMB 10442 / H16 / Stanier 337) (Ralstonia eutropha).